The primary structure comprises 64 residues: SPbeta prophage-derived uncharacterized protein YopV (64 aa).

This is SPbeta prophage-derived uncharacterized protein YopV (yopV) from Bacillus subtilis (strain 168).